Consider the following 281-residue polypeptide: Succinate dehydrogenase [ubiquinone] iron-sulfur subunit 1, mitochondrial (281 aa).

The transit peptide at 1–25 directs the protein to the mitochondrion; it reads MAAAALLRRSPAARALLSPALSSRL. Positions 26–48 are disordered; the sequence is VASKPHSSSPAPPPPPSKAGANT. One can recognise a 2Fe-2S ferredoxin-type domain in the interval 49–141; that stretch reads KTFSIYRWDP…ASTISPLPHM (93 aa). [2Fe-2S] cluster-binding residues include Cys-102, Cys-107, and Cys-122. The region spanning 184–214 is the 4Fe-4S ferredoxin-type domain; sequence DRAKLDGMYECILCACCSTSCPSYWWNPEEY. The [4Fe-4S] cluster site is built by Cys-194, Cys-197, and Cys-200. Residue Cys-204 participates in [3Fe-4S] cluster binding. An a ubiquinone-binding site is contributed by Trp-209. Residues Cys-251 and Cys-257 each contribute to the [3Fe-4S] cluster site. Residue Cys-261 participates in [4Fe-4S] cluster binding.

The protein belongs to the succinate dehydrogenase/fumarate reductase iron-sulfur protein family. As to quaternary structure, component of complex II composed of eight subunits in plants: four classical SDH subunits SDH1, SDH2, SDH3 and SDH4 (a flavoprotein (FP), an iron-sulfur protein (IP), and a cytochrome b composed of a large and a small subunit.), as well as four subunits unknown in mitochondria from bacteria and heterotrophic eukaryotes. [2Fe-2S] cluster serves as cofactor. [3Fe-4S] cluster is required as a cofactor. The cofactor is [4Fe-4S] cluster.

It localises to the mitochondrion inner membrane. The catalysed reaction is a quinone + succinate = fumarate + a quinol. It participates in carbohydrate metabolism; tricarboxylic acid cycle; fumarate from succinate (eukaryal route): step 1/1. Iron-sulfur protein (IP) subunit of succinate dehydrogenase (SDH) that is involved in complex II of the mitochondrial electron transport chain and is responsible for transferring electrons from succinate to ubiquinone (coenzyme Q). The polypeptide is Succinate dehydrogenase [ubiquinone] iron-sulfur subunit 1, mitochondrial (Oryza sativa subsp. japonica (Rice)).